We begin with the raw amino-acid sequence, 102 residues long: Biotrophy-associated secreted protein 4 (102 aa).

The N-terminal stretch at 1–21 (MQLSFSAIAILLAFAVNHATA) is a signal peptide. Asn-36 carries an N-linked (GlcNAc...) asparagine glycan.

It localises to the secreted. Its function is as follows. Secreted effector involved in biotrophic colonization of plant cells. Participates in transition from the biotrophic to the necrotrophic phase of Magnaporthe oryzae. Elicits rice basic defense responses during the early stage of interaction and promotes cell death in the late stage of compatible interaction. This chain is Biotrophy-associated secreted protein 4, found in Pyricularia oryzae (strain 70-15 / ATCC MYA-4617 / FGSC 8958) (Rice blast fungus).